The chain runs to 170 residues: Peptide deformylase (170 aa).

Cys94 and His136 together coordinate Fe cation. The active site involves Glu137. His140 lines the Fe cation pocket.

This sequence belongs to the polypeptide deformylase family. Requires Fe(2+) as cofactor.

It carries out the reaction N-terminal N-formyl-L-methionyl-[peptide] + H2O = N-terminal L-methionyl-[peptide] + formate. Removes the formyl group from the N-terminal Met of newly synthesized proteins. Requires at least a dipeptide for an efficient rate of reaction. N-terminal L-methionine is a prerequisite for activity but the enzyme has broad specificity at other positions. The chain is Peptide deformylase from Xylella fastidiosa (strain 9a5c).